The chain runs to 279 residues: Ribosomal RNA small subunit methyltransferase A (279 aa).

The S-adenosyl-L-methionine site is built by Asn28, Leu30, Gly55, Glu77, Asp103, and Asn122.

The protein belongs to the class I-like SAM-binding methyltransferase superfamily. rRNA adenine N(6)-methyltransferase family. RsmA subfamily.

The protein resides in the cytoplasm. The enzyme catalyses adenosine(1518)/adenosine(1519) in 16S rRNA + 4 S-adenosyl-L-methionine = N(6)-dimethyladenosine(1518)/N(6)-dimethyladenosine(1519) in 16S rRNA + 4 S-adenosyl-L-homocysteine + 4 H(+). Specifically dimethylates two adjacent adenosines (A1518 and A1519) in the loop of a conserved hairpin near the 3'-end of 16S rRNA in the 30S particle. May play a critical role in biogenesis of 30S subunits. The sequence is that of Ribosomal RNA small subunit methyltransferase A from Ruegeria pomeroyi (strain ATCC 700808 / DSM 15171 / DSS-3) (Silicibacter pomeroyi).